Reading from the N-terminus, the 135-residue chain is CDGSH iron-sulfur domain-containing protein 2B (135 aa).

Over 1 to 37 (MVLETISKIIKTQLPAYLKKFPLPETIGGFARLTVLD) the chain is Lumenal. The chain crosses the membrane as a helical span at residues 38–60 (WLRLLPLLGILALLGYLTIRPFL). Residues 61-135 (PKKKKQKDSL…GPLILKKKIL (75 aa)) are Cytoplasmic-facing. Residues Cys-99, Cys-101, Cys-110, and His-114 each coordinate [2Fe-2S] cluster.

It belongs to the CISD protein family. CISD2 subfamily. As to quaternary structure, homodimer. [2Fe-2S] cluster serves as cofactor.

It localises to the endoplasmic reticulum membrane. It is found in the mitochondrion outer membrane. Functionally, regulator of autophagy that contributes to antagonize becn1-mediated cellular autophagy at the endoplasmic reticulum. Participates in the interaction of bcl2 with becn1 and is required for bcl2-mediated depression of endoplasmic reticulum Ca(2+) stores during autophagy. The sequence is that of CDGSH iron-sulfur domain-containing protein 2B (cisd2b) from Salmo salar (Atlantic salmon).